Consider the following 270-residue polypeptide: 3-methyl-2-oxobutanoate hydroxymethyltransferase (270 aa).

Mg(2+)-binding residues include Asp50 and Asp89. 3-methyl-2-oxobutanoate contacts are provided by residues 50 to 51, Asp89, and Lys118; that span reads DS. A Mg(2+)-binding site is contributed by Glu120. The Proton acceptor role is filled by Glu187.

This sequence belongs to the PanB family. As to quaternary structure, homodecamer; pentamer of dimers. The cofactor is Mg(2+).

The protein localises to the cytoplasm. The enzyme catalyses 3-methyl-2-oxobutanoate + (6R)-5,10-methylene-5,6,7,8-tetrahydrofolate + H2O = 2-dehydropantoate + (6S)-5,6,7,8-tetrahydrofolate. Its pathway is cofactor biosynthesis; (R)-pantothenate biosynthesis; (R)-pantoate from 3-methyl-2-oxobutanoate: step 1/2. In terms of biological role, catalyzes the reversible reaction in which hydroxymethyl group from 5,10-methylenetetrahydrofolate is transferred onto alpha-ketoisovalerate to form ketopantoate. The chain is 3-methyl-2-oxobutanoate hydroxymethyltransferase from Helicobacter pylori (strain G27).